The primary structure comprises 316 residues: UDP-N-acetylenolpyruvoylglucosamine reductase (316 aa).

The FAD-binding PCMH-type domain maps to 27 to 225 (VGGKAERFYR…KTAINALLKK (199 aa)). Arg190 is an active-site residue. Ser239 functions as the Proton donor in the catalytic mechanism. Residue Glu309 is part of the active site.

It belongs to the MurB family. The cofactor is FAD.

The protein resides in the cytoplasm. The catalysed reaction is UDP-N-acetyl-alpha-D-muramate + NADP(+) = UDP-N-acetyl-3-O-(1-carboxyvinyl)-alpha-D-glucosamine + NADPH + H(+). It participates in cell wall biogenesis; peptidoglycan biosynthesis. In terms of biological role, cell wall formation. The polypeptide is UDP-N-acetylenolpyruvoylglucosamine reductase (Coxiella burnetii (strain Dugway 5J108-111)).